The primary structure comprises 327 residues: Methionine import ATP-binding protein MetN (327 aa).

The ABC transporter domain occupies 3 to 239 (VELKNIEKIY…PKHAVTKELI (237 aa)). 36–43 (GYSGAGKS) contacts ATP.

This sequence belongs to the ABC transporter superfamily. Methionine importer (TC 3.A.1.24) family. In terms of assembly, the complex is composed of two ATP-binding proteins (MetN), two transmembrane proteins (MetI) and a solute-binding protein (MetQ).

It localises to the cell inner membrane. It catalyses the reaction L-methionine(out) + ATP + H2O = L-methionine(in) + ADP + phosphate + H(+). The enzyme catalyses D-methionine(out) + ATP + H2O = D-methionine(in) + ADP + phosphate + H(+). In terms of biological role, part of the ABC transporter complex MetNIQ involved in methionine import. Responsible for energy coupling to the transport system. The protein is Methionine import ATP-binding protein MetN of Helicobacter acinonychis (strain Sheeba).